The chain runs to 627 residues: 1-deoxy-D-xylulose-5-phosphate synthase (627 aa).

Thiamine diphosphate is bound by residues histidine 80 and 121-123 (GHS). A Mg(2+)-binding site is contributed by aspartate 152. Thiamine diphosphate-binding positions include 153–154 (GA), asparagine 181, tyrosine 288, and glutamate 370. A Mg(2+)-binding site is contributed by asparagine 181.

The protein belongs to the transketolase family. DXPS subfamily. Homodimer. Mg(2+) serves as cofactor. Requires thiamine diphosphate as cofactor.

It carries out the reaction D-glyceraldehyde 3-phosphate + pyruvate + H(+) = 1-deoxy-D-xylulose 5-phosphate + CO2. Its pathway is metabolic intermediate biosynthesis; 1-deoxy-D-xylulose 5-phosphate biosynthesis; 1-deoxy-D-xylulose 5-phosphate from D-glyceraldehyde 3-phosphate and pyruvate: step 1/1. Catalyzes the acyloin condensation reaction between C atoms 2 and 3 of pyruvate and glyceraldehyde 3-phosphate to yield 1-deoxy-D-xylulose-5-phosphate (DXP). The polypeptide is 1-deoxy-D-xylulose-5-phosphate synthase (Aliivibrio salmonicida (strain LFI1238) (Vibrio salmonicida (strain LFI1238))).